A 216-amino-acid polypeptide reads, in one-letter code: MIF4G domain-containing protein A (216 aa).

The MIF4G domain maps to Asp2–Gly199.

It belongs to the MIF4GD family. In terms of assembly, interacts with eif4g1, eif4g2 and slbp; probably tethered by SLBP to the 3'-end of mRNAs ending with the histone stem-loop, it also interacts with eif4g1 which is bound to their 5'-end.

Its subcellular location is the cytoplasm. It localises to the nucleus. Its function is as follows. Functions in replication-dependent translation of histone mRNAs which differ from other eukaryotic mRNAs in that they do not end with a poly-A tail but a stem-loop. May participate in circularizing those mRNAs specifically enhancing their translation. The polypeptide is MIF4G domain-containing protein A (mif4gda) (Danio rerio (Zebrafish)).